An 823-amino-acid polypeptide reads, in one-letter code: Leucine--tRNA ligase (823 aa).

The 'HIGH' region signature appears at 55–65 (PYPSGNLHIGH). The 'KMSKS' region signature appears at 590–594 (KMSKS). Lys593 lines the ATP pocket.

This sequence belongs to the class-I aminoacyl-tRNA synthetase family.

The protein localises to the cytoplasm. It catalyses the reaction tRNA(Leu) + L-leucine + ATP = L-leucyl-tRNA(Leu) + AMP + diphosphate. This is Leucine--tRNA ligase from Deinococcus radiodurans (strain ATCC 13939 / DSM 20539 / JCM 16871 / CCUG 27074 / LMG 4051 / NBRC 15346 / NCIMB 9279 / VKM B-1422 / R1).